The following is a 92-amino-acid chain: Small ribosomal subunit protein uS19 (92 aa).

It belongs to the universal ribosomal protein uS19 family.

Protein S19 forms a complex with S13 that binds strongly to the 16S ribosomal RNA. The chain is Small ribosomal subunit protein uS19 from Bacillus pumilus (strain SAFR-032).